The following is a 591-amino-acid chain: Putative BTB/POZ domain-containing protein At5g13600 (591 aa).

Positions 28–95 constitute a BTB domain; that stretch reads PDVMIQVVDE…CYGVRIEVTP (68 aa). An NPH3 domain is found at 208–493; that stretch reads NWWFNDVSSF…VQVLFFEQMR (286 aa). The residue at position 434 (tyrosine 434) is a Phosphotyrosine.

It belongs to the NPH3 family.

Its pathway is protein modification; protein ubiquitination. Functionally, may act as a substrate-specific adapter of an E3 ubiquitin-protein ligase complex (CUL3-RBX1-BTB) which mediates the ubiquitination and subsequent proteasomal degradation of target proteins. The polypeptide is Putative BTB/POZ domain-containing protein At5g13600 (Arabidopsis thaliana (Mouse-ear cress)).